We begin with the raw amino-acid sequence, 590 residues long: MKKVWFSLLGGAMLLGSVASGASAESSVSGPAQLTPTFHTEQWKAPSSVSGDDIVWSYLNRQKKSLLGVDSSSVREQFRIVDRTSDKSGVSHYRLKQYVNGIPVYGAEQTIHVGKSGEVTSYLGAVINEDQQEEATQGTTPKISASEAVYTAYKEAAARIEALPTSDDTISKDAEEPSSVSKDTYAEAANNDKTLSVDKDELSLDKASVLKDSKIEAVEAEKSSIAKIANLQPEVDPKAELYYYPKGDDLLLVYVTEVNVLEPAPLRTRYIIDANDGSIVFQYDIINEATGKGVLGDSKSFTTTASGSSYQLKDTTRGNGIVTYTASNRQSIPGTLLTDADNVWNDPAGVDAHAYAAKTYDYYKSKFGRNSIDGRGLQLRSTVHYGSRYNNAFWNGSQMTYGDGDGDGSTFIAFSGDPDVVGHELTHGVTEYTSNLEYYGESGALNEAFSDVIGNDIQRKNWLVGDDIYTPNICGDALRSMSNPTLYDQPHHYSNLYKGSSDNGGVHTNSGIINKAYYLLAQGGTFHGVTVNGIGRDAAVQIYYSAFTNYLTSSSDFSNARAAVIQAAKDLYGANSAEATAAAKSFDAVG.

A signal peptide spans 1 to 24 (MKKVWFSLLGGAMLLGSVASGASA). Residues 25–286 (ESSVSGPAQL…GSIVFQYDII (262 aa)) constitute a propeptide, activation peptide. Asp-339, Asp-341, and Asp-419 together coordinate Ca(2+). Residue His-423 participates in Zn(2+) binding. The active site involves Glu-424. His-427 and Glu-447 together coordinate Zn(2+). Positions 466, 469, 470, 473, and 476 each coordinate Ca(2+). Residue His-507 is the Proton donor of the active site.

It belongs to the peptidase M4 family. It depends on Ca(2+) as a cofactor. The cofactor is Zn(2+).

Its subcellular location is the secreted. The enzyme catalyses Similar, but not identical, to that of thermolysin.. Involved in the generation of beta- and alpha-amylases from the large amylase precursor. This chain is Bacillolysin (npr), found in Paenibacillus polymyxa (Bacillus polymyxa).